We begin with the raw amino-acid sequence, 192 residues long: 3-hydroxyanthranilate 3,4-dioxygenase (192 aa).

Residue arginine 50 participates in O2 binding. Residues histidine 54, glutamate 60, and histidine 102 each contribute to the Fe cation site. Residue glutamate 60 participates in substrate binding. Residues arginine 106 and glutamate 116 each coordinate substrate. Residues cysteine 131, cysteine 134, cysteine 168, and cysteine 171 each contribute to the a divalent metal cation site.

It belongs to the 3-HAO family. Fe(2+) serves as cofactor.

Its subcellular location is the cytoplasm. The catalysed reaction is 3-hydroxyanthranilate + O2 = (2Z,4Z)-2-amino-3-carboxymuconate 6-semialdehyde. It functions in the pathway cofactor biosynthesis; NAD(+) biosynthesis; quinolinate from L-kynurenine: step 3/3. Functionally, catalyzes the oxidative ring opening of 3-hydroxyanthranilate to 2-amino-3-carboxymuconate semialdehyde, which spontaneously cyclizes to quinolinate. The polypeptide is 3-hydroxyanthranilate 3,4-dioxygenase (bna1) (Neosartorya fischeri (strain ATCC 1020 / DSM 3700 / CBS 544.65 / FGSC A1164 / JCM 1740 / NRRL 181 / WB 181) (Aspergillus fischerianus)).